The chain runs to 1370 residues: DNA-directed RNA polymerase subunit beta (1370 aa).

Belongs to the RNA polymerase beta chain family. In terms of assembly, the RNAP catalytic core consists of 2 alpha, 1 beta, 1 beta' and 1 omega subunit. When a sigma factor is associated with the core the holoenzyme is formed, which can initiate transcription.

It carries out the reaction RNA(n) + a ribonucleoside 5'-triphosphate = RNA(n+1) + diphosphate. Its function is as follows. DNA-dependent RNA polymerase catalyzes the transcription of DNA into RNA using the four ribonucleoside triphosphates as substrates. This Bordetella pertussis (strain Tohama I / ATCC BAA-589 / NCTC 13251) protein is DNA-directed RNA polymerase subunit beta.